Here is a 458-residue protein sequence, read N- to C-terminus: Argininosuccinate lyase (458 aa).

Belongs to the lyase 1 family. Argininosuccinate lyase subfamily.

Its subcellular location is the cytoplasm. The catalysed reaction is 2-(N(omega)-L-arginino)succinate = fumarate + L-arginine. It participates in amino-acid biosynthesis; L-arginine biosynthesis; L-arginine from L-ornithine and carbamoyl phosphate: step 3/3. This chain is Argininosuccinate lyase, found in Salmonella typhi.